A 357-amino-acid chain; its full sequence is Geranylgeranyl pyrophosphate synthase, chloroplastic (357 aa).

Residues 1-40 (MRSNLCHPLKNQLPISFFLSGTIRKPIFSCSRLSISAIIT) constitute a chloroplast transit peptide. Isopentenyl diphosphate is bound by residues K106, R109, and H138. Residues D145 and D151 each coordinate Mg(2+). Position 156 (R156) interacts with dimethylallyl diphosphate. R157 lines the isopentenyl diphosphate pocket. The dimethylallyl diphosphate site is built by K242, T243, Q280, K297, and K307.

The protein belongs to the FPP/GGPP synthase family. Mg(2+) serves as cofactor.

The protein resides in the plastid. The protein localises to the chloroplast. It catalyses the reaction isopentenyl diphosphate + dimethylallyl diphosphate = (2E)-geranyl diphosphate + diphosphate. The catalysed reaction is isopentenyl diphosphate + (2E)-geranyl diphosphate = (2E,6E)-farnesyl diphosphate + diphosphate. It carries out the reaction isopentenyl diphosphate + (2E,6E)-farnesyl diphosphate = (2E,6E,10E)-geranylgeranyl diphosphate + diphosphate. Its pathway is isoprenoid biosynthesis; farnesyl diphosphate biosynthesis; farnesyl diphosphate from geranyl diphosphate and isopentenyl diphosphate: step 1/1. It functions in the pathway isoprenoid biosynthesis; geranyl diphosphate biosynthesis; geranyl diphosphate from dimethylallyl diphosphate and isopentenyl diphosphate: step 1/1. The protein operates within isoprenoid biosynthesis; geranylgeranyl diphosphate biosynthesis; geranylgeranyl diphosphate from farnesyl diphosphate and isopentenyl diphosphate: step 1/1. Catalyzes the trans-addition of the three molecules of IPP onto DMAPP to form geranylgeranyl pyrophosphate. This Catharanthus roseus (Madagascar periwinkle) protein is Geranylgeranyl pyrophosphate synthase, chloroplastic (GGPS1).